We begin with the raw amino-acid sequence, 218 residues long: ATP-dependent Clp protease proteolytic subunit 2 (218 aa).

The protein belongs to the peptidase S14 family. Fourteen ClpP subunits assemble into 2 heptameric rings which stack back to back to give a disk-like structure with a central cavity, resembling the structure of eukaryotic proteasomes.

It localises to the cytoplasm. It carries out the reaction Hydrolysis of proteins to small peptides in the presence of ATP and magnesium. alpha-casein is the usual test substrate. In the absence of ATP, only oligopeptides shorter than five residues are hydrolyzed (such as succinyl-Leu-Tyr-|-NHMec, and Leu-Tyr-Leu-|-Tyr-Trp, in which cleavage of the -Tyr-|-Leu- and -Tyr-|-Trp bonds also occurs).. Its function is as follows. Cleaves peptides in various proteins in a process that requires ATP hydrolysis. Has a chymotrypsin-like activity. Plays a major role in the degradation of misfolded proteins. The sequence is that of ATP-dependent Clp protease proteolytic subunit 2 from Gloeobacter violaceus (strain ATCC 29082 / PCC 7421).